The following is a 143-amino-acid chain: Nucleoside diphosphate kinase (143 aa).

Residues lysine 11, phenylalanine 59, arginine 87, threonine 93, arginine 104, and asparagine 114 each contribute to the ATP site. Residue histidine 117 is the Pros-phosphohistidine intermediate of the active site.

The protein belongs to the NDK family. As to quaternary structure, homotetramer. Mg(2+) is required as a cofactor.

Its subcellular location is the cytoplasm. It catalyses the reaction a 2'-deoxyribonucleoside 5'-diphosphate + ATP = a 2'-deoxyribonucleoside 5'-triphosphate + ADP. The enzyme catalyses a ribonucleoside 5'-diphosphate + ATP = a ribonucleoside 5'-triphosphate + ADP. Functionally, major role in the synthesis of nucleoside triphosphates other than ATP. The ATP gamma phosphate is transferred to the NDP beta phosphate via a ping-pong mechanism, using a phosphorylated active-site intermediate. The protein is Nucleoside diphosphate kinase of Shewanella baltica (strain OS223).